The following is a 136-amino-acid chain: Small ribosomal subunit protein eS6 (136 aa).

It belongs to the eukaryotic ribosomal protein eS6 family.

This Methanosarcina acetivorans (strain ATCC 35395 / DSM 2834 / JCM 12185 / C2A) protein is Small ribosomal subunit protein eS6.